Consider the following 263-residue polypeptide: Cytochrome c oxidase subunit 3 (263 aa).

7 consecutive transmembrane segments (helical) span residues 7–27 (ITVLINIFFIFSNYNNIKAHL), 44–64 (FSVGILFTSNPIIFIIFVYSI), 78–98 (GMLSIIISEAILFITYFWGIL), 120–140 (LILTITFILASASCMTACLQF), 145–165 (GMSLEISSIVFIIYLLGECFA), 191–211 (VTGLHFSHVIVGLLLLLIYFI), and 241–261 (ITILYWHFVEIVWLFIEYFFY).

The protein belongs to the cytochrome c oxidase subunit 3 family. Component of the cytochrome c oxidase (complex IV, CIV), a multisubunit enzyme composed of a catalytic core of 3 subunits and several supernumerary subunits. The complex exists as a monomer or a dimer and forms supercomplexes (SCs) in the inner mitochondrial membrane with ubiquinol-cytochrome c oxidoreductase (cytochrome b-c1 complex, complex III, CIII).

It localises to the mitochondrion inner membrane. The enzyme catalyses 4 Fe(II)-[cytochrome c] + O2 + 8 H(+)(in) = 4 Fe(III)-[cytochrome c] + 2 H2O + 4 H(+)(out). Functionally, component of the cytochrome c oxidase, the last enzyme in the mitochondrial electron transport chain which drives oxidative phosphorylation. The respiratory chain contains 3 multisubunit complexes succinate dehydrogenase (complex II, CII), ubiquinol-cytochrome c oxidoreductase (cytochrome b-c1 complex, complex III, CIII) and cytochrome c oxidase (complex IV, CIV), that cooperate to transfer electrons derived from NADH and succinate to molecular oxygen, creating an electrochemical gradient over the inner membrane that drives transmembrane transport and the ATP synthase. Cytochrome c oxidase is the component of the respiratory chain that catalyzes the reduction of oxygen to water. Electrons originating from reduced cytochrome c in the intermembrane space (IMS) are transferred via the dinuclear copper A center (CU(A)) of subunit 2 and heme A of subunit 1 to the active site in subunit 1, a binuclear center (BNC) formed by heme A3 and copper B (CU(B)). The BNC reduces molecular oxygen to 2 water molecules using 4 electrons from cytochrome c in the IMS and 4 protons from the mitochondrial matrix. This is Cytochrome c oxidase subunit 3 (COIII) from Plasmodium vivax.